The sequence spans 503 residues: Probable cytosol aminopeptidase (503 aa).

The Mn(2+) site is built by lysine 274 and aspartate 279. The active site involves lysine 286. The Mn(2+) site is built by aspartate 297, aspartate 356, and glutamate 358. The active site involves arginine 360.

This sequence belongs to the peptidase M17 family. Requires Mn(2+) as cofactor.

Its subcellular location is the cytoplasm. It catalyses the reaction Release of an N-terminal amino acid, Xaa-|-Yaa-, in which Xaa is preferably Leu, but may be other amino acids including Pro although not Arg or Lys, and Yaa may be Pro. Amino acid amides and methyl esters are also readily hydrolyzed, but rates on arylamides are exceedingly low.. The enzyme catalyses Release of an N-terminal amino acid, preferentially leucine, but not glutamic or aspartic acids.. Its function is as follows. Presumably involved in the processing and regular turnover of intracellular proteins. Catalyzes the removal of unsubstituted N-terminal amino acids from various peptides. The polypeptide is Probable cytosol aminopeptidase (Burkholderia mallei (strain SAVP1)).